A 69-amino-acid chain; its full sequence is DNA gyrase inhibitor YacG (69 aa).

Zn(2+) is bound by residues Cys14, Cys17, Cys33, and Cys37. Residues 46–69 form a disordered region; sequence ADEEKSIPGAPDMSDSDGWSEDQY. Over residues 59-69 the composition is skewed to acidic residues; it reads SDSDGWSEDQY.

This sequence belongs to the DNA gyrase inhibitor YacG family. Interacts with GyrB. Zn(2+) is required as a cofactor.

Its function is as follows. Inhibits all the catalytic activities of DNA gyrase by preventing its interaction with DNA. Acts by binding directly to the C-terminal domain of GyrB, which probably disrupts DNA binding by the gyrase. The protein is DNA gyrase inhibitor YacG of Aliivibrio fischeri (strain ATCC 700601 / ES114) (Vibrio fischeri).